The following is a 149-amino-acid chain: Calmodulin (149 aa).

An N-acetylalanine modification is found at Ala2. EF-hand domains follow at residues 8 to 43 (EQIAEFKEAFSLFDKDGDGTITTKELGTVMRSLGQN), 44 to 79 (PTEAELQDMINEVNADGNGTIDFPEFLTMMARKMKD), 81 to 116 (DSEEEIREAFRVFDKDGNGYISAAELRHVMTNLGEK), and 117 to 149 (LTDEEVDEMIREADIDGDGQVNYEEFVQMMTAK). The Ca(2+) site is built by Asp21, Asp23, Asp25, Thr27, Glu32, Asp59, Asn61, Thr63, Glu68, Asp94, Asp96, Asn98, Tyr100, and Glu105. Residue Lys116 is modified to N6,N6,N6-trimethyllysine. Ca(2+) contacts are provided by Asp130, Asp132, Asp134, Gln136, and Glu141.

It belongs to the calmodulin family.

Calmodulin acts as part of a calcium signal transduction pathway by mediating the control of a large number of enzymes, ion channels, aquaporins and other proteins through calcium-binding. Calcium-binding is required for the activation of calmodulin. Among the enzymes to be stimulated by the calmodulin-calcium complex are a number of protein kinases, such as myosin light-chain kinases and calmodulin-dependent protein kinase type II (CaMK2), and phosphatases. The polypeptide is Calmodulin (Myxine glutinosa (Atlantic hagfish)).